Consider the following 153-residue polypeptide: Large ribosomal subunit protein bL27m (153 aa).

The transit peptide at 1 to 37 directs the protein to the mitochondrion; that stretch reads MINQGLFIRVNNFQLLKASLAYKKASNILTFPPIRTS. A disordered region spans residues 34 to 57; it reads IRTSTKHGGGSSKNTGDSAGRRLG.

Belongs to the bacterial ribosomal protein bL27 family. Component of the mitochondrial large ribosomal subunit (mt-LSU). Mature yeast 74S mitochondrial ribosomes consist of a small (37S) and a large (54S) subunit. The 37S small subunit contains a 15S ribosomal RNA (15S mt-rRNA) and at least 32 different proteins. The 54S large subunit contains a 21S rRNA (21S mt-rRNA) and at least 45 different proteins.

The protein resides in the mitochondrion. In terms of biological role, component of the mitochondrial ribosome (mitoribosome), a dedicated translation machinery responsible for the synthesis of mitochondrial genome-encoded proteins, including at least some of the essential transmembrane subunits of the mitochondrial respiratory chain. The mitoribosomes are attached to the mitochondrial inner membrane and translation products are cotranslationally integrated into the membrane. The polypeptide is Large ribosomal subunit protein bL27m (mrp7) (Schizosaccharomyces pombe (strain 972 / ATCC 24843) (Fission yeast)).